The sequence spans 210 residues: Proteasome subunit beta (210 aa).

Residues 1–10 (MKELDQLTKG) constitute a propeptide, removed in mature form; by autocatalysis. Catalysis depends on Thr-11, which acts as the Nucleophile.

The protein belongs to the peptidase T1B family. As to quaternary structure, the 20S proteasome core is composed of 14 alpha and 14 beta subunits that assemble into four stacked heptameric rings, resulting in a barrel-shaped structure. The two inner rings, each composed of seven catalytic beta subunits, are sandwiched by two outer rings, each composed of seven alpha subunits. The catalytic chamber with the active sites is on the inside of the barrel. Has a gated structure, the ends of the cylinder being occluded by the N-termini of the alpha-subunits. Is capped at one or both ends by the proteasome regulatory ATPase, PAN.

It localises to the cytoplasm. The enzyme catalyses Cleavage of peptide bonds with very broad specificity.. With respect to regulation, the formation of the proteasomal ATPase PAN-20S proteasome complex, via the docking of the C-termini of PAN into the intersubunit pockets in the alpha-rings, triggers opening of the gate for substrate entry. Interconversion between the open-gate and close-gate conformations leads to a dynamic regulation of the 20S proteasome proteolysis activity. In terms of biological role, component of the proteasome core, a large protease complex with broad specificity involved in protein degradation. The polypeptide is Proteasome subunit beta (Methanopyrus kandleri (strain AV19 / DSM 6324 / JCM 9639 / NBRC 100938)).